The sequence spans 69 residues: Large ribosomal subunit protein uL29 (69 aa).

The protein belongs to the universal ribosomal protein uL29 family.

This is Large ribosomal subunit protein uL29 from Thermoanaerobacter pseudethanolicus (strain ATCC 33223 / 39E) (Clostridium thermohydrosulfuricum).